Reading from the N-terminus, the 1331-residue chain is ABC multidrug transporter MDR2 (1331 aa).

Basic and acidic residues-rich tracts occupy residues 1–20 and 31–41; these read MVEVSEKPNTQDDGVSKQEN and SDKEKVAKKGN. Residues 1-51 form a disordered region; the sequence is MVEVSEKPNTQDDGVSKQENRNPASSSSSTSDKEKVAKKGNSDATKSSTPE. The next 4 membrane-spanning stretches (helical) occupy residues 93–113, 147–167, 219–239, and 242–262; these read MIFLAIVSLASIAAGAALPLF, YFVYLGIAQFILLYVSTVGFI, KVGLTLTALSTFFSAFIIGYV, and WKLALICSSTIVAMILVMGGI. One can recognise an ABC transmembrane type-1 1 domain in the interval 97–387; it reads AIVSLASIAA…VAPNTQAFAS (291 aa). A glycan (N-linked (GlcNAc...) asparagine) is linked at asparagine 293. 2 helical membrane passes run 325–345 and 358–378; these read LGIMFGSMMAIMYSNYGLGFW and LSAIVNILLAIVIGSFSIGNV. In terms of domain architecture, ABC transporter 1 spans 422–667; it reads IEFRGIKHIY…KGTYLQLVEA (246 aa). 457–464 lines the ATP pocket; it reads GPSGSGKS. Residue asparagine 529 is glycosylated (N-linked (GlcNAc...) asparagine). 2 helical membrane passes run 762–782 and 810–830; these read LCGFFFAVLSGAGQPVQSVFF and FLMLGLVQLVTQSAQGVIFAI. Residues 764–1051 form the ABC transmembrane type-1 2 domain; that stretch reads GFFFAVLSGA…VFSFSPDMGK (288 aa). Residue asparagine 860 is glycosylated (N-linked (GlcNAc...) asparagine). Helical transmembrane passes span 884-904, 910-930, 995-1015, and 1025-1045; these read LGTILMVSTTLIVALTVALAF, LVCISTVPVLLLCGFYRFWIL, ASQSFSFFCLALGFWYGGGLL, and FFLCISCVIFGSQSAGIVFSF. Positions 1086–1324 constitute an ABC transporter 2 domain; that stretch reads IEFRDVHFRY…KGRYYELVHM (239 aa). N-linked (GlcNAc...) asparagine glycosylation occurs at asparagine 1108. 1121–1128 contributes to the ATP binding site; that stretch reads GPSGCGKS.

Belongs to the ABC transporter superfamily. ABCB family. Multidrug resistance exporter (TC 3.A.1.201) subfamily.

The protein localises to the cell membrane. It carries out the reaction itraconazole(in) + ATP + H2O = itraconazole(out) + ADP + phosphate + H(+). Its function is as follows. Pleiotropic ABC efflux transporter that may be involved in the modulation susceptibility to a wide range of unrelated cytotoxic compounds, including terbinafine, 4-nitroquinoline N-oxide, and ethidium bromide. May play a role in pathogenicity. This chain is ABC multidrug transporter MDR2, found in Trichophyton interdigitale (strain MR816).